The sequence spans 765 residues: MPRSPGTRLKPAKYIPVATAAALLVGSSTLFFVFTCPWLTRAVSPAVPVYNGIIFLFVLANFSMATFMDPGVFPRADEDEDKEDDFRAPLYKNVDVRGIQVRMKWCATCHFYRPPRCSHCSVCDNCVEDFDHHCPWVNNCIGRRNYRYFFLFLLSLSAHMVGVVAFGLVYVLNHAEGLGAAHTTITMAVMCVAGLFFIPVIGLTGFHVVLVTRGRTTNEQVTGKFRGGVNPFTRGCCGNVEHVLCSPLAPRYVVEPPRLPLAVSLKPPFLRPELLDRAAPLKVKLSDNGLKAGLGRSKSKGSLDRLDEKPLDLGPPLPPKIEAGTFSSDLQTPRPGSAESALSVQRTSPPTPAMYKFRPAFPTGPKVPFCGPGEQVPGPDSLTLGDDSIRSLDFVSEPSLDLPDYGPGGLHAAYPPSPPLSASDAFSGALRSLSLKASSRRGGDHVALQPLRSEGGPPTPHRSIFAPHALPNRNGSLSYDSLLNPGSPGGHACPAHPAVGVAGYHSPYLHPGATGDPPRPLPRSFSPVLGPRPREPSPVRYDNLSRTIMASIQERKDREERERLLRSQADSLFGDSGVYDAPSSYSLQQASVLSEGPRGPALRYGSRDDLVAGPGFGGARNPALQTSLSSLSSSVSRAPRTSSSSLQADQASSNAPGPRPSSGSHRSPARQGLPSPPGTPHSPSYAGPKAVAFIHTDLPEPPPSLTVQRDHPQLKTPPSKLNGQSPGLARLGPATGPPGPSASPTRHTLVKKVSGVGGTTYEISV.

At 1–13 (MPRSPGTRLKPAK) the chain is on the cytoplasmic side. A helical transmembrane segment spans residues 14–34 (YIPVATAAALLVGSSTLFFVF). The Lumenal segment spans residues 35–52 (TCPWLTRAVSPAVPVYNG). Residues 53–73 (IIFLFVLANFSMATFMDPGVF) form a helical membrane-spanning segment. Topologically, residues 74–148 (PRADEDEDKE…NCIGRRNYRY (75 aa)) are cytoplasmic. Positions 104–154 (KWCATCHFYRPPRCSHCSVCDNCVEDFDHHCPWVNNCIGRRNYRYFFLFLL) constitute a DHHC domain. Residue Cys134 is the S-palmitoyl cysteine intermediate of the active site. A helical membrane pass occupies residues 149 to 169 (FFLFLLSLSAHMVGVVAFGLV). The Lumenal segment spans residues 170-190 (YVLNHAEGLGAAHTTITMAVM). The chain crosses the membrane as a helical span at residues 191-211 (CVAGLFFIPVIGLTGFHVVLV). Residues 212–765 (TRGRTTNEQV…VGGTTYEISV (554 aa)) are Cytoplasmic-facing. The tract at residues 293-352 (GLGRSKSKGSLDRLDEKPLDLGPPLPPKIEAGTFSSDLQTPRPGSAESALSVQRTSPPTP) is disordered. The segment covering 301–311 (GSLDRLDEKPL) has biased composition (basic and acidic residues). Ser337 bears the Phosphoserine mark. Arg441 is subject to Omega-N-methylarginine. A disordered region spans residues 509 to 540 (LHPGATGDPPRPLPRSFSPVLGPRPREPSPVR). Residues Ser606, Ser627, Ser675, Ser682, Ser725, and Ser743 each carry the phosphoserine modification. Positions 613 to 747 (GPGFGGARNP…PGPSASPTRH (135 aa)) are disordered. A compositionally biased stretch (low complexity) spans 622–653 (PALQTSLSSLSSSVSRAPRTSSSSLQADQASS).

The protein belongs to the DHHC palmitoyltransferase family. ERF2/ZDHHC9 subfamily. As to expression, widely expressed.

The protein localises to the golgi apparatus membrane. It localises to the mitochondrion membrane. The enzyme catalyses L-cysteinyl-[protein] + hexadecanoyl-CoA = S-hexadecanoyl-L-cysteinyl-[protein] + CoA. Functionally, palmitoyltransferase that catalyzes the addition of palmitate onto various protein substrates and therefore functions in several unrelated biological processes. Through the palmitoylation of ABCA1 regulates the localization of the transporter to the plasma membrane and thereby regulates its function in cholesterol and phospholipid efflux. Could also pamitoylate the D(2) dopamine receptor DRD2 and regulate its stability and localization to the plasma membrane. Could also play a role in glutamatergic transmission. In terms of biological role, (Microbial infection) Able to palmitoylate SARS coronavirus-2/SARS-CoV-2 spike protein following its synthesis in the endoplasmic reticulum (ER). In the infected cell, promotes spike biogenesis by protecting it from premature ER degradation, increases half-life and controls the lipid organization of its immediate membrane environment. Once the virus has formed, spike palmitoylation controls fusion with the target cell. The sequence is that of Palmitoyltransferase ZDHHC8 from Homo sapiens (Human).